The following is a 142-amino-acid chain: MAKEFSRTRRIAQQLQQELAVVLQRDMKDPRIGFVTVNDVDVSRDLSYAKVFVTFFEEDEKLVQEKVEALDAAAGYIRSLVAGRMKLRVMPELRFIYDSSLVEGMRMSNLVSRVISDDEAKQQEHGTVENAKQDGDKAEDDK.

The segment at 118 to 142 (DEAKQQEHGTVENAKQDGDKAEDDK) is disordered.

Belongs to the RbfA family. As to quaternary structure, monomer. Binds 30S ribosomal subunits, but not 50S ribosomal subunits or 70S ribosomes.

Its subcellular location is the cytoplasm. One of several proteins that assist in the late maturation steps of the functional core of the 30S ribosomal subunit. Associates with free 30S ribosomal subunits (but not with 30S subunits that are part of 70S ribosomes or polysomes). Required for efficient processing of 16S rRNA. May interact with the 5'-terminal helix region of 16S rRNA. The sequence is that of Ribosome-binding factor A from Shewanella piezotolerans (strain WP3 / JCM 13877).